The following is a 188-amino-acid chain: Methylamine dehydrogenase light chain (188 aa).

The tat-type signal signal peptide spans 1 to 57; it reads MLGNFRFDDMVEKLSRRVAGRTSRRGAIGRLGTVLAGAALVPLLPVDRRGRVSRANA. Cystine bridges form between C80–C145, C86–C118, C93–C178, C95–C143, C103–C134, and C135–C166. W114 carries the tryptophylquinone modification. Positions 114–165 form a cross-link, tryptophan tryptophylquinone (Trp-Trp); the sequence is WVASCYNPTDGQSYLIAYRDCCGYNVSGRCPCLNTEGELPVYRPEFANDIIW.

Belongs to the aromatic amine dehydrogenase light chain family. In terms of assembly, heterotetramer of two light and two heavy chains. Requires tryptophan tryptophylquinone residue as cofactor. Post-translationally, predicted to be exported by the Tat system. The position of the signal peptide cleavage has been experimentally proven. Tryptophan tryptophylquinone (TTQ) is formed by oxidation of the indole ring of a tryptophan to form tryptophylquinone followed by covalent cross-linking with another tryptophan residue.

Its subcellular location is the periplasm. The enzyme catalyses 2 oxidized [amicyanin] + methylamine + H2O = 2 reduced [amicyanin] + formaldehyde + NH4(+) + 2 H(+). The protein operates within one-carbon metabolism; methylamine degradation; formaldehyde from methylamine: step 1/1. Its function is as follows. Methylamine dehydrogenase carries out the oxidation of methylamine. Electrons are passed from methylamine dehydrogenase to amicyanin. The polypeptide is Methylamine dehydrogenase light chain (mauA) (Paracoccus versutus (Thiobacillus versutus)).